The chain runs to 195 residues: MELSESVQRGIQTLADPGSFDSNAFALLLRAAFQSLLDARADEAALDHPYLKQIDPVVLKHCHAAAATCILEAGKHQVDKSTLSTYLEDCKFDRERIELFCTEYQNNKNSLETLLGSIGRSLPHITDVSWRLEYQIKTNQLHKMYRPGYLVTLNVENNDSQSYPEINFSCNMEQLQDLVGKLKDASKSLERATQL.

The region spanning 124–193 (HITDVSWRLE…DASKSLERAT (70 aa)) is the COMM domain.

The protein belongs to the COMM domain-containing protein 3 family. Component of the commander complex consisting of the CCC subcomplex and the retriever subcomplex. Component of the CCC (COMMD/CCDC22/CCDC93) subcomplex consisting of COMMD1, COMMD2, COMMD3, COMMD4, COMMD5, COMMD6, COMMD7, COMMD8, COMMD9, COMMD10, CCDC22 and CCDC93; within the complex forms a heterodimer with COMMD2. Interacts with NFKB1/p105. Interacts with CCDC22, CCDC93, SCNN1B, CUL3, CUL4A, CUL4B, CUL5.

Its subcellular location is the cytoplasm. It is found in the nucleus. Functionally, scaffold protein in the commander complex that is essential for endosomal recycling of transmembrane cargos; the commander complex is composed of the CCC subcomplex and the retriever subcomplex. May modulate activity of cullin-RING E3 ubiquitin ligase (CRL) complexes. May down-regulate activation of NF-kappa-B. Modulates Na(+) transport in epithelial cells by regulation of apical cell surface expression of amiloride-sensitive sodium channel (ENaC) subunits. The chain is COMM domain-containing protein 3 (Commd3) from Mus musculus (Mouse).